Reading from the N-terminus, the 836-residue chain is Homeobox-leucine zipper protein ATHB-15 (836 aa).

The homeobox DNA-binding region spans 14–77 (DNGKYVRYTP…NRRCREKQRK (64 aa)). A coiled-coil region spans residues 72–115 (REKQRKEASRLQAVNRKLTAMNKLLMEENDRLQKQVSQLVHENS). One can recognise an START domain in the interval 151-379 (RDASPAGLLS…IAQEVTQTNS (229 aa)).

Belongs to the HD-ZIP homeobox family. Class III subfamily. As to quaternary structure, interacts with ESR1 and ESR2. Interacts with ZPR3. In terms of tissue distribution, highly expressed the developing vascular elements and the adaxial portion of cotyledons. Expressed in developing ovules, stamens and carpels. Expressed in procambium and shoot meristem.

The protein resides in the nucleus. Probable transcription factor involved in the regulation of meristem development to promote lateral organ formation. May regulates procambial and vascular tissue formation or maintenance, and vascular development in inflorescence stems. The chain is Homeobox-leucine zipper protein ATHB-15 (ATHB-15) from Arabidopsis thaliana (Mouse-ear cress).